The sequence spans 86 residues: Serine protease inhibitor Kazal-type 4 (86 aa).

Residues 1 to 26 (MAVRLWVVALALAALFIVDREVPVSA) form the signal peptide. In terms of domain architecture, Kazal-like spans 31 to 86 (FSRMPICEHMTESPDCSRIYDPVCGTDGVTYESECKLCLARIENKQDIQIVKDGEC). 3 cysteine pairs are disulfide-bonded: Cys37-Cys68, Cys46-Cys65, and Cys54-Cys86.

Synthesized in duodenal goblet cells and in monocytes in bone marrow and blood.

It is found in the secreted. Functionally, inhibits the glucose-induced insulin secretion from perfused pancreas; also plays a role in the immune system. Does not inhibit trypsin. The sequence is that of Serine protease inhibitor Kazal-type 4 (SPINK4) from Sus scrofa (Pig).